The chain runs to 207 residues: Thiamine-phosphate synthase (207 aa).

4-amino-2-methyl-5-(diphosphooxymethyl)pyrimidine is bound by residues 35 to 39 and N67; that span reads QYRDK. Mg(2+)-binding residues include D68 and D86. T105 is a binding site for 4-amino-2-methyl-5-(diphosphooxymethyl)pyrimidine. Position 132-134 (132-134) interacts with 2-[(2R,5Z)-2-carboxy-4-methylthiazol-5(2H)-ylidene]ethyl phosphate; the sequence is SVT. Residue K135 coordinates 4-amino-2-methyl-5-(diphosphooxymethyl)pyrimidine. G162 contributes to the 2-[(2R,5Z)-2-carboxy-4-methylthiazol-5(2H)-ylidene]ethyl phosphate binding site.

Belongs to the thiamine-phosphate synthase family. Mg(2+) is required as a cofactor.

The enzyme catalyses 2-[(2R,5Z)-2-carboxy-4-methylthiazol-5(2H)-ylidene]ethyl phosphate + 4-amino-2-methyl-5-(diphosphooxymethyl)pyrimidine + 2 H(+) = thiamine phosphate + CO2 + diphosphate. It catalyses the reaction 2-(2-carboxy-4-methylthiazol-5-yl)ethyl phosphate + 4-amino-2-methyl-5-(diphosphooxymethyl)pyrimidine + 2 H(+) = thiamine phosphate + CO2 + diphosphate. It carries out the reaction 4-methyl-5-(2-phosphooxyethyl)-thiazole + 4-amino-2-methyl-5-(diphosphooxymethyl)pyrimidine + H(+) = thiamine phosphate + diphosphate. It functions in the pathway cofactor biosynthesis; thiamine diphosphate biosynthesis; thiamine phosphate from 4-amino-2-methyl-5-diphosphomethylpyrimidine and 4-methyl-5-(2-phosphoethyl)-thiazole: step 1/1. Its function is as follows. Condenses 4-methyl-5-(beta-hydroxyethyl)thiazole monophosphate (THZ-P) and 2-methyl-4-amino-5-hydroxymethyl pyrimidine pyrophosphate (HMP-PP) to form thiamine monophosphate (TMP). The protein is Thiamine-phosphate synthase of Pseudomonas putida (strain ATCC 700007 / DSM 6899 / JCM 31910 / BCRC 17059 / LMG 24140 / F1).